We begin with the raw amino-acid sequence, 262 residues long: ATP synthase subunit delta (262 aa).

The protein belongs to the ATPase delta chain family. In terms of assembly, F-type ATPases have 2 components, F(1) - the catalytic core - and F(0) - the membrane proton channel. F(1) has five subunits: alpha(3), beta(3), gamma(1), delta(1), epsilon(1). F(0) has three main subunits: a(1), b(2) and c(10-14). The alpha and beta chains form an alternating ring which encloses part of the gamma chain. F(1) is attached to F(0) by a central stalk formed by the gamma and epsilon chains, while a peripheral stalk is formed by the delta and b chains.

Its subcellular location is the cell membrane. Functionally, f(1)F(0) ATP synthase produces ATP from ADP in the presence of a proton or sodium gradient. F-type ATPases consist of two structural domains, F(1) containing the extramembraneous catalytic core and F(0) containing the membrane proton channel, linked together by a central stalk and a peripheral stalk. During catalysis, ATP synthesis in the catalytic domain of F(1) is coupled via a rotary mechanism of the central stalk subunits to proton translocation. In terms of biological role, this protein is part of the stalk that links CF(0) to CF(1). It either transmits conformational changes from CF(0) to CF(1) or is implicated in proton conduction. The chain is ATP synthase subunit delta from Tropheryma whipplei (strain TW08/27) (Whipple's bacillus).